Consider the following 568-residue polypeptide: Natural resistance-associated macrophage protein 2 (568 aa).

The span at methionine 1–aspartate 20 shows a compositional bias: basic and acidic residues. Residues methionine 1–glutamate 45 are disordered. Topologically, residues methionine 1–lysine 69 are cytoplasmic. Over residues alanine 30–threonine 40 the composition is skewed to polar residues. A helical transmembrane segment spans residues leucine 70–isoleucine 90. Residues glutamate 91 to glutamine 95 lie on the Extracellular side of the membrane. The helical transmembrane segment at serine 96–leucine 117 threads the bilayer. At leucine 118–glutamate 154 the chain is on the cytoplasmic side. A helical membrane pass occupies residues leucine 155–leucine 175. Residues serine 176 to arginine 179 are Extracellular-facing. Residues valine 180–phenylalanine 194 form a helical membrane-spanning segment. Topologically, residues valine 195 to glutamate 208 are cytoplasmic. Residues alanine 209 to valine 229 form a helical membrane-spanning segment. At lysine 230–glutamine 255 the chain is on the extracellular side. The helical transmembrane segment at alanine 256–valine 276 threads the bilayer. Topologically, residues lysine 277–cysteine 301 are cytoplasmic. Residues isoleucine 302–phenylalanine 322 form a helical membrane-spanning segment. Residues phenylalanine 323 to glycine 360 are Extracellular-facing. N-linked (GlcNAc...) asparagine glycans are attached at residues asparagine 336 and asparagine 349. The helical transmembrane segment at valine 361–alanine 381 threads the bilayer. Over alanine 382–arginine 408 the chain is Cytoplasmic. The helical transmembrane segment at phenylalanine 409–phenylalanine 429 threads the bilayer. Over glutamine 430–aspartate 440 the chain is Extracellular. Residues phenylalanine 441 to threonine 461 traverse the membrane as a helical segment. Over serine 462–isoleucine 482 the chain is Cytoplasmic. A helical transmembrane segment spans residues leucine 483–glycine 503. Residues histidine 504–alanine 506 lie on the Extracellular side of the membrane. The chain crosses the membrane as a helical span at residues leucine 507–tryptophan 527. Residues glutamine 528–arginine 568 are Cytoplasmic-facing. The tract at residues tyrosine 555–threonine 559 is required for early endosome targeting. Phosphoserine is present on residues leucine 556, serine 564, and serine 567.

It belongs to the NRAMP family. In terms of assembly, forms a complex with NDFIP1 and NEDD4L, in cortical neurons, in response to iron and cobalt exposure; this interaction leads to SLC11A2 ubiquitination by NEDD4L and proteasome-dependent degradation. Interacts with NDFIP1, NDFIP2 and WWP2; this interaction leads to SLC11A2 ubiquitination by WWP2 and subsequent proteasome-dependent degradation. Interacts with COX2 and TOM6 at the outer mitochondrion membrane. Interacts with ARRDC1; this interaction regulates the incorporation of SLC11A2 into extracellular vesicles through an ubiquitination-dependent mechanism. Interacts with ARRDC4; controls the incorporation of SLC11A2 into extracellular vesicles through an ubiquitination-dependent mechanism. Ubiquitinated by WWP2. In terms of processing, N-glycosylated. As to expression, abundantly expressed in erythroid precursor cells (at protein level). Expressed in duodenum (at protein level).

It localises to the golgi apparatus. Its subcellular location is the trans-Golgi network membrane. The protein localises to the early endosome membrane. It is found in the recycling endosome membrane. The protein resides in the cell membrane. It localises to the late endosome membrane. Its subcellular location is the lysosome membrane. The protein localises to the apical cell membrane. It is found in the mitochondrion outer membrane. The protein resides in the extracellular vesicle membrane. It carries out the reaction Fe(2+)(in) + H(+)(in) = Fe(2+)(out) + H(+)(out). It catalyses the reaction Co(2+)(out) + H(+)(out) = Co(2+)(in) + H(+)(in). The catalysed reaction is Cd(2+)(out) + H(+)(out) = Cd(2+)(in) + H(+)(in). The enzyme catalyses Mn(2+)(in) + H(+)(in) = Mn(2+)(out) + H(+)(out). It carries out the reaction Zn(2+)(out) + H(+)(out) = Zn(2+)(in) + H(+)(in). It catalyses the reaction Ni(2+)(out) + H(+)(out) = Ni(2+)(in) + H(+)(in). The catalysed reaction is H(+)(in) = H(+)(out). The enzyme catalyses Fe(2+)(in) = Fe(2+)(out). Proton-coupled metal ion symporter operating with a proton to metal ion stoichiometry of 1:1. Selectively transports various divalent metal cations, in decreasing affinity: Cd(2+) &gt; Fe(2+) &gt; Co(2+), Mn(2+) &gt;&gt; Zn(2+), Ni(2+), VO(2+). Essential for maintenance of iron homeostasis by modulating intestinal absorption of dietary Fe(2+) and TF-associated endosomal Fe(2+) transport in erythroid precursors and other cells. Enables Fe(2+) and Mn(2+) ion entry into mitochondria, and is thus expected to promote mitochondrial heme synthesis, iron-sulfur cluster biogenesis and antioxidant defense. Can mediate uncoupled fluxes of either protons or metal ions. In Mus musculus (Mouse), this protein is Natural resistance-associated macrophage protein 2 (Slc11a2).